Consider the following 26-residue polypeptide: Omega-conotoxin CVIC (26 aa).

3 disulfide bridges follow: Cys-1-Cys-16, Cys-8-Cys-20, and Cys-15-Cys-26. Residue Cys-26 is modified to Cysteine amide.

It belongs to the conotoxin O1 superfamily. In terms of tissue distribution, expressed by the venom duct.

Its subcellular location is the secreted. Its function is as follows. Omega-conotoxins act at presynaptic membranes, they bind and block voltage-gated calcium channels (Cav). This toxin blocks N-, P- and Q-type calcium channels. The sequence is that of Omega-conotoxin CVIC from Conus catus (Cat cone).